Consider the following 149-residue polypeptide: MDVQLPIEAKDIQKLIPHRYPFLQLDRITAFEPMKTLTAIKNVSINEPQFQGHFPDLPVMPGVLIIEAMAQACGTLAILSEGGRKENEFFFFAGIDEARFKRQVIPGDQLVFEVELLTSRRGIGKFNAVAKVDGQVAVEAIIMCAKRVV.

The active site involves histidine 53.

It belongs to the thioester dehydratase family. FabZ subfamily.

The protein localises to the cytoplasm. It carries out the reaction a (3R)-hydroxyacyl-[ACP] = a (2E)-enoyl-[ACP] + H2O. Its function is as follows. Involved in unsaturated fatty acids biosynthesis. Catalyzes the dehydration of short chain beta-hydroxyacyl-ACPs and long chain saturated and unsaturated beta-hydroxyacyl-ACPs. The protein is 3-hydroxyacyl-[acyl-carrier-protein] dehydratase FabZ of Neisseria meningitidis serogroup C / serotype 2a (strain ATCC 700532 / DSM 15464 / FAM18).